Here is a 388-residue protein sequence, read N- to C-terminus: CUE domain-containing protein 1 (388 aa).

The span at 1-10 shows a compositional bias: low complexity; it reads MTSLFRRSSS. The tract at residues 1 to 45 is disordered; the sequence is MTSLFRRSSSGSGGGGATGARGAGTGAGDGSTAPQELNNSRPARQ. A compositionally biased stretch (gly residues) spans 11–29; that stretch reads GSGGGGATGARGAGTGAGD. The CUE domain occupies 50–93; sequence EFNQAMDDFKTMFPNMDYDIIECVLRANSGAVDATIDQLLQMNL. Disordered stretches follow at residues 152–178, 196–225, 270–302, and 369–388; these read PTPPPRIDVPGSGQPASQRRYRNWNPP, DSIQGHPGGSKPMSGEGGPPPAPGPMACDQ, SQKSKSNNAAVGNDGGFPSSVPGTSETNPTVSE, and DFRGRRQEVPKVEEALREGQ. A compositionally biased stretch (polar residues) spans 290 to 300; the sequence is VPGTSETNPTV.

The chain is CUE domain-containing protein 1 (Cuedc1) from Mus musculus (Mouse).